The chain runs to 327 residues: Lipoyl synthase (327 aa).

[4Fe-4S] cluster-binding residues include Cys72, Cys77, Cys83, Cys98, Cys102, Cys105, and Ser313. Residues 83–302 form the Radical SAM core domain; that stretch reads CWSHGTATIM…RKVGLEKGFL (220 aa).

This sequence belongs to the radical SAM superfamily. Lipoyl synthase family. [4Fe-4S] cluster is required as a cofactor.

The protein localises to the cytoplasm. The catalysed reaction is [[Fe-S] cluster scaffold protein carrying a second [4Fe-4S](2+) cluster] + N(6)-octanoyl-L-lysyl-[protein] + 2 oxidized [2Fe-2S]-[ferredoxin] + 2 S-adenosyl-L-methionine + 4 H(+) = [[Fe-S] cluster scaffold protein] + N(6)-[(R)-dihydrolipoyl]-L-lysyl-[protein] + 4 Fe(3+) + 2 hydrogen sulfide + 2 5'-deoxyadenosine + 2 L-methionine + 2 reduced [2Fe-2S]-[ferredoxin]. It functions in the pathway protein modification; protein lipoylation via endogenous pathway; protein N(6)-(lipoyl)lysine from octanoyl-[acyl-carrier-protein]: step 2/2. In terms of biological role, catalyzes the radical-mediated insertion of two sulfur atoms into the C-6 and C-8 positions of the octanoyl moiety bound to the lipoyl domains of lipoate-dependent enzymes, thereby converting the octanoylated domains into lipoylated derivatives. This is Lipoyl synthase from Francisella tularensis subsp. novicida (strain U112).